A 105-amino-acid chain; its full sequence is SH3 domain-binding glutamic acid-rich-like protein 2 (105 aa).

An SH3-binding motif is present at residues 61-67 (KGNPLPP).

Belongs to the SH3BGR family.

Its subcellular location is the nucleus. The chain is SH3 domain-binding glutamic acid-rich-like protein 2 (sh3bgrl2) from Danio rerio (Zebrafish).